The primary structure comprises 423 residues: Glutamate-1-semialdehyde 2,1-aminomutase (423 aa).

At Lys-266 the chain carries N6-(pyridoxal phosphate)lysine.

It belongs to the class-III pyridoxal-phosphate-dependent aminotransferase family. HemL subfamily. As to quaternary structure, homodimer. Requires pyridoxal 5'-phosphate as cofactor.

It is found in the cytoplasm. It carries out the reaction (S)-4-amino-5-oxopentanoate = 5-aminolevulinate. The protein operates within porphyrin-containing compound metabolism; protoporphyrin-IX biosynthesis; 5-aminolevulinate from L-glutamyl-tRNA(Glu): step 2/2. The polypeptide is Glutamate-1-semialdehyde 2,1-aminomutase (Desulfovibrio desulfuricans (strain ATCC 27774 / DSM 6949 / MB)).